The following is a 257-amino-acid chain: Nuclear receptor subfamily 0 group B member 2 (257 aa).

The NR LBD domain maps to Ser-16 to Arg-257. Symmetric dimethylarginine; by PRMT5 is present on Arg-57.

This sequence belongs to the nuclear hormone receptor family. NR0 subfamily. Interacts (via N-terminus) with NEUROD1 (via N-terminus and C-terminus). Interacts with ID2. Interacts with RORG, NFIL3, NR1D1 and BHLHE41. Heterodimer; efficient DNA binding requires dimerization with another bHLH protein. Interacts with RARA, RXRA, THRB, NR5A1, NR5A2, NR1I3, PPARA, PPARG and EID1. Interacts with HNF4A; the resulting heterodimer is transcriptionally inactive. Interacts with DDX3X; this interaction disrupts the interaction between HNF4 and NR0B2/SHP that forms inactive heterodimers and enhances the formation of active HNF4 homodimers. Post-translationally, arginine methylation by PRMT5 enhances repression activity of metabolic genes in liver in response to bile acid signaling, by increasing interaction with cofactors. Liver. Low levels of expression were detected in heart and pancreas.

The protein localises to the nucleus. It localises to the cytoplasm. Functionally, transcriptional regulator that acts as a negative regulator of receptor-dependent signaling pathways. Specifically inhibits transactivation of the nuclear receptor with which it interacts. Inhibits transcriptional activity of NEUROD1 on E-box-containing promoter by interfering with the coactivation function of the p300/CBP-mediated transcription complex for NEUROD1. Essential component of the liver circadian clock which via its interaction with NR1D1 and RORG regulates NPAS2-mediated hepatic lipid metabolism. Regulates the circadian expression of cytochrome P450 (CYP) enzymes. Represses: NR5A2 and HNF4A to down-regulate CYP2C38, NFLI3 to up-regulate CYP2A5, BHLHE41/HNF1A axis to up-regulate CYP1A2, CYP2E1 and CYP3A11, and NR1D1 to up-regulate CYP2B10, CYP4A10 and CYP4A14. In Homo sapiens (Human), this protein is Nuclear receptor subfamily 0 group B member 2 (NR0B2).